A 101-amino-acid polypeptide reads, in one-letter code: Urease subunit beta (101 aa).

Belongs to the urease beta subunit family. As to quaternary structure, heterotrimer of UreA (gamma), UreB (beta) and UreC (alpha) subunits. Three heterotrimers associate to form the active enzyme.

The protein resides in the cytoplasm. The enzyme catalyses urea + 2 H2O + H(+) = hydrogencarbonate + 2 NH4(+). The protein operates within nitrogen metabolism; urea degradation; CO(2) and NH(3) from urea (urease route): step 1/1. The polypeptide is Urease subunit beta (Polaromonas naphthalenivorans (strain CJ2)).